An 87-amino-acid polypeptide reads, in one-letter code: Toxin Css39.8 (87 aa).

An N-terminal signal peptide occupies residues 1-19 (MNSLLMITACFFLIGTVWA). Positions 20–85 (KEGYLVNKST…TYPLPNKSCS (66 aa)) constitute an LCN-type CS-alpha/beta domain. 4 cysteine pairs are disulfide-bonded: Cys-31/Cys-84, Cys-35/Cys-60, Cys-44/Cys-65, and Cys-48/Cys-67.

It belongs to the long (4 C-C) scorpion toxin superfamily. Sodium channel inhibitor family. Beta subfamily. Expressed by the venom gland.

It is found in the secreted. Beta toxins bind voltage-independently at site-4 of sodium channels (Nav) and shift the voltage of activation toward more negative potentials thereby affecting sodium channel activation and promoting spontaneous and repetitive firing. This toxin is lethal to crustaceans (freshwater crayfish (Cambarellus montezumae spp.)), it provokes a reversible paralysis to insects (crickets (Achaeta spp.)), but is not toxic to mice. At high concentrations, it does displace the (beta) mammal-specific toxin Cn2 from rat brain synaptosomes. This chain is Toxin Css39.8, found in Centruroides suffusus (Durango bark scorpion).